A 90-amino-acid chain; its full sequence is MNKTQLIDFIAEKADLSKAQAKAALEATLDGVTDALKEGDQVQLIGFGTFKVNHRAARTGRNPKTGAEIQIAAANVPAFVAGKALKDAVK.

This sequence belongs to the bacterial histone-like protein family. Heterodimer of an alpha and a beta chain.

Functionally, histone-like DNA-binding protein which is capable of wrapping DNA to stabilize it, and thus to prevent its denaturation under extreme environmental conditions. The protein is DNA-binding protein HU-alpha (hupA) of Vibrio proteolyticus (Aeromonas proteolytica).